Reading from the N-terminus, the 108-residue chain is MGVEIETISPGDGRTFPKKGQICVVHYTGMLQNGKKFDSSRDRNKPFKFRIGKQEVIKGFEEGAAQMSLGQRAKLTCTPDVAYGATGHPGVIPPNATLIFDVELLNLE.

One can recognise a PPIase FKBP-type domain in the interval 20-108 (GQICVVHYTG…IFDVELLNLE (89 aa)).

The protein belongs to the FKBP-type PPIase family. FKBP1 subfamily. As to quaternary structure, identified in a complex composed of RYR2, FKBP1B, PKA catalytic subunit, PRKAR2A, AKAP6, and the protein phosphatases PP2A and PP1. Interacts directly with RYR2. Detected in heart muscle (at protein level). Ubiquitous.

The protein localises to the cytoplasm. The protein resides in the sarcoplasmic reticulum. It carries out the reaction [protein]-peptidylproline (omega=180) = [protein]-peptidylproline (omega=0). Its activity is regulated as follows. Inhibited by both FK506 and rapamycin. Has the potential to contribute to the immunosuppressive and toxic effects of FK506 and rapamycin. PPIases accelerate the folding of proteins. It catalyzes the cis-trans isomerization of proline imidic peptide bonds in oligopeptides. This Rattus norvegicus (Rat) protein is Peptidyl-prolyl cis-trans isomerase FKBP1B (Fkbp1b).